The primary structure comprises 428 residues: Oxysterol-binding protein 9 (428 aa).

Residues 1 to 11 (MTEVQSITTSG) show a composition bias toward polar residues. Disordered regions lie at residues 1 to 32 (MTEV…STTN) and 396 to 428 (ALIE…KNQK). Over residues 18-32 (SPSSSSSSISSSTTN) the composition is skewed to low complexity. A coiled-coil region spans residues 389–422 (EEAKKYKALIEDNQRKQKKEKDEKLKKDEKLKKE).

This sequence belongs to the OSBP family.

The protein is Oxysterol-binding protein 9 (osbI) of Dictyostelium discoideum (Social amoeba).